Consider the following 142-residue polypeptide: Mediator of RNA polymerase II transcription subunit 21 (142 aa).

A coiled-coil region spans residues A87–E131.

Belongs to the Mediator complex subunit 21 family. In terms of assembly, component of the Mediator complex.

The protein resides in the nucleus. Its function is as follows. Component of the Mediator complex, a coactivator involved in the regulated transcription of nearly all RNA polymerase II-dependent genes. Mediator functions as a bridge to convey information from gene-specific regulatory proteins to the basal RNA polymerase II transcription machinery. Mediator is recruited to promoters by direct interactions with regulatory proteins and serves as a scaffold for the assembly of a functional preinitiation complex with RNA polymerase II and the general transcription factors. This Eremothecium gossypii (strain ATCC 10895 / CBS 109.51 / FGSC 9923 / NRRL Y-1056) (Yeast) protein is Mediator of RNA polymerase II transcription subunit 21 (SRB7).